Reading from the N-terminus, the 181-residue chain is MLIFKDAFTDDELASDSFPMKLVDGLIWEFKGRQVVRREGEIQLAGANPSTEGEDGDEGSEECVERGIDFVLNHRLQEMNCYEDLATFKSYCKSFMKKVVELMQKNGKSEAEISEFKRKIQAWVVSLLSKDRFKQLQFFIGERMAEGQGEGQVAVVEYRDEEEGEVPYLMLVKEALVEEKQ.

The 181-residue stretch at 1-181 (MLIFKDAFTD…VKEALVEEKQ (181 aa)) folds into the TCTP domain.

Belongs to the TCTP family.

Its subcellular location is the cytoplasm. Functionally, involved in calcium binding and microtubule stabilization. This is Translationally-controlled tumor protein homolog from Wuchereria bancrofti.